Consider the following 312-residue polypeptide: Malate dehydrogenase (312 aa).

Residues 7-13 (GAAGGIG) and D34 each bind NAD(+). The substrate site is built by R81 and R87. Residues N94 and 117-119 (ITN) contribute to the NAD(+) site. Substrate is bound by residues N119 and R153. Catalysis depends on H177, which acts as the Proton acceptor. M227 provides a ligand contact to NAD(+).

This sequence belongs to the LDH/MDH superfamily. MDH type 1 family. Homodimer.

The enzyme catalyses (S)-malate + NAD(+) = oxaloacetate + NADH + H(+). Its function is as follows. Catalyzes the reversible oxidation of malate to oxaloacetate. In Pectobacterium carotovorum subsp. carotovorum (strain PC1), this protein is Malate dehydrogenase.